A 262-amino-acid polypeptide reads, in one-letter code: Large ribosomal subunit protein bL9m (262 aa).

Residues 1-49 constitute a mitochondrion transit peptide; sequence MAASMAPRCSSLLWAGAAWLRQRGIGELLQPRIERSTPGRDFSLSHYQS.

The protein belongs to the bacterial ribosomal protein bL9 family. In terms of assembly, component of the mitochondrial ribosome large subunit (39S) which comprises a 16S rRNA and about 50 distinct proteins.

The protein resides in the mitochondrion. The protein is Large ribosomal subunit protein bL9m (Mrpl9) of Rattus norvegicus (Rat).